The primary structure comprises 330 residues: Putative acetyltransferase ORF330 (330 aa).

Helical transmembrane passes span 29–49 (GFAS…LPLS), 50–70 (IFRP…FLLL), 90–110 (IYPL…YYFH), 118–138 (LFLH…SYVF), 163–183 (FLLA…IVTL), 190–210 (LLYF…IAYI), 225–245 (ISFL…NEFL), 252–272 (VVVY…PPKV), 273–293 (LSKV…WHLL), and 297–317 (LLGV…EFPL).

Its subcellular location is the host membrane. The chain is Putative acetyltransferase ORF330 from Acidianus convivator (ATV).